The sequence spans 256 residues: Ubiquinone/menaquinone biosynthesis C-methyltransferase UbiE (256 aa).

Residues Thr79, Asp100, and 128-129 (DA) each bind S-adenosyl-L-methionine.

The protein belongs to the class I-like SAM-binding methyltransferase superfamily. MenG/UbiE family.

The enzyme catalyses a 2-demethylmenaquinol + S-adenosyl-L-methionine = a menaquinol + S-adenosyl-L-homocysteine + H(+). It carries out the reaction a 2-methoxy-6-(all-trans-polyprenyl)benzene-1,4-diol + S-adenosyl-L-methionine = a 5-methoxy-2-methyl-3-(all-trans-polyprenyl)benzene-1,4-diol + S-adenosyl-L-homocysteine + H(+). It participates in quinol/quinone metabolism; menaquinone biosynthesis; menaquinol from 1,4-dihydroxy-2-naphthoate: step 2/2. It functions in the pathway cofactor biosynthesis; ubiquinone biosynthesis. In terms of biological role, methyltransferase required for the conversion of demethylmenaquinol (DMKH2) to menaquinol (MKH2) and the conversion of 2-polyprenyl-6-methoxy-1,4-benzoquinol (DDMQH2) to 2-polyprenyl-3-methyl-6-methoxy-1,4-benzoquinol (DMQH2). The polypeptide is Ubiquinone/menaquinone biosynthesis C-methyltransferase UbiE (Stutzerimonas stutzeri (strain A1501) (Pseudomonas stutzeri)).